We begin with the raw amino-acid sequence, 128 residues long: U24-ctenitoxin-Pn1a (128 aa).

Thyroglobulin type-1 domains lie at 4–67 (KSDC…ECGC) and 72–127 (KERK…SLKC). 4 disulfides stabilise this stretch: cysteine 7-cysteine 27, cysteine 38-cysteine 45, cysteine 47-cysteine 67, and cysteine 107-cysteine 127.

As to expression, expressed by the venom gland.

The protein resides in the secreted. Functionally, cysteine proteinase inhibitor. The chain is U24-ctenitoxin-Pn1a from Phoneutria nigriventer (Brazilian armed spider).